Consider the following 718-residue polypeptide: Sodium/myo-inositol cotransporter (718 aa).

Topologically, residues 1-9 (MRAVLETAD) are extracellular. Residues 10–29 (IAIVALYFILVMCIGFFAMW) form a helical membrane-spanning segment. Residues 30–38 (KSNRSTVSG) lie on the Cytoplasmic side of the membrane. The helical transmembrane segment at 39 to 57 (YFLAGRSMTWVAIGASLFV) threads the bilayer. Over 58 to 86 (SNIGSEHFIGLAGSGAASGFAVGAWEFNA) the chain is Extracellular. The chain crosses the membrane as a helical span at residues 87–110 (LLLLQLLGWVFIPIYIRSGVYTMP). At 111 to 123 (EYLSKRFGGHRIQ) the chain is on the cytoplasmic side. The helical transmembrane segment at 124–144 (VYFAALSLILYIFTKLSVDLY) threads the bilayer. The Extracellular segment spans residues 145–157 (SGALFIQESLGWN). Residues 158 to 183 (LYVSVILLIGMTALLTVTGGLVAVIY) traverse the membrane as a helical segment. Residues 184–186 (TDT) lie on the Cytoplasmic side of the membrane. Residues 187–205 (LQALLMIVGALTLMIISMM) form a helical membrane-spanning segment. Over 206–303 (EIGGFEEVKR…HAKGSTLMAG (98 aa)) the chain is Extracellular. Asparagine 232 carries N-linked (GlcNAc...) asparagine glycosylation. Residues 304-324 (FLKLLPMFIIVVPGMISRILF) traverse the membrane as a helical segment. Residues 325-353 (ADDIACINPEHCMQVCGSRAGCSNIAYPR) are Cytoplasmic-facing. The chain crosses the membrane as a helical span at residues 354 to 376 (LVMKLVPVGLRGLMMAVMIAALM). Over 377–406 (SDLDSIFNSASTIFTLDVYKLIRRSASSRE) the chain is Extracellular. Residues 407-430 (LMIVGRIFVAFMVVISIAWVPIIV) form a helical membrane-spanning segment. The Cytoplasmic segment spans residues 431 to 443 (EMQGGQMYLYIQE). The helical transmembrane segment at 444-462 (VADYLTPPVAALFLLAIFW) threads the bilayer. Topologically, residues 463–510 (KRCNEQGAFYGGMAGFVLGAVRLTLAFAYRAPECDQPDNRPGFIKDIH) are extracellular. Residues 511–532 (YMYVATALFWVTGLITVIVSLL) traverse the membrane as a helical segment. The Cytoplasmic portion of the chain corresponds to 533–695 (TPPPTKEQIR…QMLEEPPQVK (163 aa)). Phosphoserine is present on residues serine 594 and serine 632. Residues 696-716 (LILNIGLFAVCSLGIFMFVYF) traverse the membrane as a helical segment. Residues 717 to 718 (SL) lie on the Extracellular side of the membrane.

This sequence belongs to the sodium:solute symporter (SSF) (TC 2.A.21) family. In terms of assembly, interacts with KCNQ2 (via the pore module). Interacts with KCNQ1; this interaction is direct. Forms coregulatory complexes with ion channels KCNQ2-KCNQ3 and KCNQ1-KCNE2. In terms of tissue distribution, kidney cortex and medulla.

The protein resides in the apical cell membrane. It localises to the basolateral cell membrane. It carries out the reaction myo-inositol(out) + 2 Na(+)(out) = myo-inositol(in) + 2 Na(+)(in). The catalysed reaction is scyllo-inositol(out) + 2 Na(+)(out) = scyllo-inositol(in) + 2 Na(+)(in). Its activity is regulated as follows. Inhibited by phlorizin and phloretin. In terms of biological role, electrogenic Na(+)-coupled sugar symporter that actively transports myo-inositol and its stereoisomer scyllo-inositol across the plasma membrane, with a Na(+) to sugar coupling ratio of 2:1. Maintains myo-inositol concentration gradient that defines cell volume and fluid balance during osmotic stress, in particular in the fetoplacental unit and central nervous system. Forms coregulatory complexes with voltage-gated K(+) ion channels, allosterically altering ion selectivity, voltage dependence and gating kinetics of the channel. In turn, K(+) efflux through the channel forms a local electrical gradient that modulates electrogenic Na(+)-coupled myo-inositol influx through the transporter. Associates with KCNQ1-KCNE2 channel in the apical membrane of choroid plexus epithelium and regulates the myo-inositol gradient between blood and cerebrospinal fluid with an impact on neuron excitability. Associates with KCNQ2-KCNQ3 channel altering ion selectivity, increasing Na(+) and Cs(+) permeation relative to K(+) permeation. Provides myo-inositol precursor for biosynthesis of phosphoinositides such as PI(4,5)P2, thus indirectly affecting the activity of phosphoinositide-dependent ion channels and Ca(2+) signaling upon osmotic stress. Has very low affinity for sugars such as L-fucose and L-xylose, with an affinity about three orders of magnitude lower than myo-inositol. This Canis lupus familiaris (Dog) protein is Sodium/myo-inositol cotransporter (SLC5A3).